The chain runs to 904 residues: Protein abrupt (904 aa).

Residues 1–15 are compositionally biased toward polar residues; it reads MTESTQLQTAENNNA. Disordered stretches follow at residues 1–30 and 53–72; these read MTES…TSSV and GSAL…HQQQ. Residues 103-168 form the BTB domain; sequence VDVTLACDER…MYNGEVNVSH (66 aa). The segment covering 204–238 has biased composition (low complexity); the sequence is SHNSSNNNNNNSSSNNSLSNNNNNNNNNAESSNHN. Disordered stretches follow at residues 204–287, 349–390, 411–438, and 451–501; these read SHNS…LNSP, ASSA…PPPQ, LLDR…KDRE, and ALEN…NQRS. Residues 239 to 253 are compositionally biased toward polar residues; it reads KISSYLSPNQTSAAC. A compositionally biased stretch (low complexity) spans 254 to 286; it reads NNSSNSNSNNHSSSHNNSSSNNISGSLNSSLNS. Positions 429-438 are enriched in basic and acidic residues; it reads SGRDTSKDRE. Positions 452–461 are enriched in polar residues; the sequence is LENSNGQQAN. Phosphoserine is present on serine 474. A compositionally biased stretch (basic and acidic residues) spans 481-500; it reads PSDRGDGQHDGTLDGIDNQR. C2H2-type zinc fingers lie at residues 544–567 and 573–596; these read RPCP…EDKH and YRCV…SRQH. Disordered regions lie at residues 633–696 and 832–904; these read ELRA…GGSS and AAGN…VHNT. A compositionally biased stretch (gly residues) spans 642 to 655; the sequence is GGSGSSGGGGGGGS. The segment covering 671 to 682 has biased composition (acidic residues); it reads DDAEDSDDDPED. Phosphoserine occurs at positions 837, 846, and 868. Basic and acidic residues predominate over residues 851 to 868; it reads MGHDEMAENDGDMRREGS. Residues 876-886 show a composition bias toward polar residues; that stretch reads DNNQSGSNHEV. A phosphoserine mark is found at serine 889 and serine 896.

In terms of tissue distribution, expressed in CNS midline cells during embryonic stages 9-13. Expression also seen in cells of the stomagastric nervous system. Segmentally repeated stripes of ectodermal expression appear at stage 11 that become uniform by stage 12 and throughout embryogenesis. Expressed at variable levels in somatic muscles from stage 16 and in all imaginal disks during larval development. Expression is seen in da neurons that grow in two-dimensional dendrites underneath the epidermis during late embryonic, larval, and pupal stages.

It localises to the nucleus. Its function is as follows. Expression is vital for development; may be involved in transcriptional regulation. In embryos, muscle specific expression is required for segmental nerve b (SNb) motoneuron target recognition within ventral longitudinal muscles. Has a role in establishing and maintaining embryonic muscle attachments, adult sensory cell formation (macrochaetae) and morphogenesis of adult appendages (legs, antenna aristae and male external genitalia). Has a role in the morphogenesis of the class I dendritic neurons: selective expression of ab in class I da neurons plays a pivotal role in forming dendritic arbors, which are characteristic of the class I cells. The development of more complex arbors of class II-IV neurons depends on the absence of ab. The sequence is that of Protein abrupt (ab) from Drosophila melanogaster (Fruit fly).